The primary structure comprises 130 residues: Small ribosomal subunit protein uS9 (130 aa).

This sequence belongs to the universal ribosomal protein uS9 family.

This Xanthomonas axonopodis pv. citri (strain 306) protein is Small ribosomal subunit protein uS9.